A 245-amino-acid chain; its full sequence is Chymotrypsin B (245 aa).

Intrachain disulfides connect C1–C121, C42–C58, C135–C201, C167–C182, and C191–C220. A propeptide spanning residues A14 to R15 is cleaved from the precursor. The region spanning I16 to A243 is the Peptidase S1 domain. Active-site charge relay system residues include H57 and D101. Catalysis depends on S195, which acts as the Charge relay system.

The protein belongs to the peptidase S1 family.

The protein resides in the secreted. Its subcellular location is the extracellular space. The catalysed reaction is Preferential cleavage: Tyr-|-Xaa, Trp-|-Xaa, Phe-|-Xaa, Leu-|-Xaa.. This is Chymotrypsin B from Gadus morhua (Atlantic cod).